We begin with the raw amino-acid sequence, 201 residues long: Lipopolysaccharide core heptose(II)-phosphate phosphatase (201 aa).

Residues 1-35 form the signal peptide; the sequence is MLAFTLRFIKNKRYLATLAGALVIIAGLTSQHAWS.

This sequence belongs to the phosphoglycerate mutase family. Ais subfamily.

It is found in the periplasm. It participates in bacterial outer membrane biogenesis; lipopolysaccharide metabolism. Functionally, catalyzes the dephosphorylation of heptose(II) of the outer membrane lipopolysaccharide core. This chain is Lipopolysaccharide core heptose(II)-phosphate phosphatase, found in Salmonella heidelberg (strain SL476).